We begin with the raw amino-acid sequence, 647 residues long: Denticleless protein homolog (647 aa).

WD repeat units follow at residues 48–88 (AAAV…KQSS), 95–134 (AHDNAVFDIAWVPGTNCLVTASGDQTARLWDVITGDLLGT), 137–177 (GHQC…KDGF), 209–248 (DSQQGVTVVLFCDETKLISSGAVDGIIKMWDLRRNYTAYH), 264–303 (TRKLGYSGLSLDYTGSRLFSNCTDDNIYMFNISGLKTTPV), 308–349 (GHSN…QAPM), and 353–393 (GHSQ…EGEN). Short sequence motifs (DDB1-binding motif) lie at residues 167 to 170 (WDTR) and 238 to 241 (WDLR). 2 disordered regions span residues 410–487 (QSPN…SKSP) and 534–647 (KRSR…RTQD). Composition is skewed to polar residues over residues 426 to 443 (PSKNPGSVRSVSLASPQP) and 471 to 486 (KMPSSLQQWISRSSKS). Positions 543–558 (LKKEDSFGLESEKRLG) are enriched in basic and acidic residues. The segment covering 586 to 600 (KGSAQPKSPSSGSSQ) has biased composition (low complexity).

It belongs to the WD repeat cdt2 family. Component of the DCX(DTL) E3 ubiquitin ligase complex, at least composed of cul4 (cul4a or cul4b), ddb1, dtl/cdt2 and rbx1.

Its subcellular location is the nucleus. It is found in the cytoplasm. It localises to the cytoskeleton. The protein localises to the microtubule organizing center. The protein resides in the centrosome. Its subcellular location is the chromosome. It functions in the pathway protein modification; protein ubiquitination. Its function is as follows. Substrate-specific adapter of a DCX (DDB1-CUL4-X-box) E3 ubiquitin-protein ligase complex required for cell cycle control, DNA damage response and translesion DNA synthesis. The DCX(DTL) complex, also named CRL4(CDT2) complex, mediates the polyubiquitination and subsequent degradation of CDT1, CDKN1A/p21(CIP1), KMT5A and SDE2. CDT1 degradation in response to DNA damage is necessary to ensure proper cell cycle regulation of DNA replication. CDKN1A/p21(CIP1) degradation during S phase or following UV irradiation is essential to control replication licensing. KMT5A degradation is also important for a proper regulation of mechanisms such as TGF-beta signaling, cell cycle progression, DNA repair and cell migration. Most substrates require their interaction with PCNA for their polyubiquitination: substrates interact with PCNA via their PIP-box, and those containing the 'K+4' motif in the PIP box, recruit the DCX(DTL) complex, leading to their degradation. In undamaged proliferating cells, the DCX(DTL) complex also promotes the 'Lys-164' monoubiquitination of PCNA, thereby being involved in PCNA-dependent translesion DNA synthesis. May play a role in the regulation of the circadian clock. The sequence is that of Denticleless protein homolog (dtl) from Danio rerio (Zebrafish).